Here is a 111-residue protein sequence, read N- to C-terminus: Large ribosomal subunit protein uL24 (111 aa).

It belongs to the universal ribosomal protein uL24 family. Part of the 50S ribosomal subunit.

One of two assembly initiator proteins, it binds directly to the 5'-end of the 23S rRNA, where it nucleates assembly of the 50S subunit. In terms of biological role, one of the proteins that surrounds the polypeptide exit tunnel on the outside of the subunit. The polypeptide is Large ribosomal subunit protein uL24 (Bifidobacterium longum (strain DJO10A)).